Reading from the N-terminus, the 122-residue chain is MIQQQTLLKVADNSGAKEIMCIRVLGGSKRKFGNIGDVIVASVKSATPGGVVKKGEVVKAVIVRSVRGLRRADGSYIKFDENAAVIIKDDKQPRGTRIFGPVARELRDNEFNKILSLAPEVL.

Belongs to the universal ribosomal protein uL14 family. Part of the 50S ribosomal subunit. Forms a cluster with proteins L3 and L19. In the 70S ribosome, L14 and L19 interact and together make contacts with the 16S rRNA in bridges B5 and B8.

Binds to 23S rRNA. Forms part of two intersubunit bridges in the 70S ribosome. The polypeptide is Large ribosomal subunit protein uL14 (Clostridium perfringens (strain ATCC 13124 / DSM 756 / JCM 1290 / NCIMB 6125 / NCTC 8237 / Type A)).